Reading from the N-terminus, the 94-residue chain is Large ribosomal subunit protein uL23 (94 aa).

Belongs to the universal ribosomal protein uL23 family. Part of the 50S ribosomal subunit. Contacts protein L29, and trigger factor when it is bound to the ribosome.

In terms of biological role, one of the early assembly proteins it binds 23S rRNA. One of the proteins that surrounds the polypeptide exit tunnel on the outside of the ribosome. Forms the main docking site for trigger factor binding to the ribosome. The protein is Large ribosomal subunit protein uL23 of Ligilactobacillus salivarius (strain UCC118) (Lactobacillus salivarius).